Reading from the N-terminus, the 620-residue chain is E3 ubiquitin-protein ligase AMFR (620 aa).

The next 7 membrane-spanning stretches (helical) occupy residues 75–95 (LFVW…GKVI), 115–135 (FWNF…VQRV), 138–158 (VVLW…VQLC), 179–199 (VLAL…LCAL), 201–221 (GHIH…LVTV), 247–267 (SSYI…LDLM), and 269–289 (HIHM…VIFM). The RING-type; atypical zinc finger occupies 334-372 (CAICWDSMTTARKLPCGHLFHNSCLRSWLEQDTSCPTCR). The CUE domain maps to 449-491 (QLNGMAHQIQEMFPQVPYHLILQDLQLTRSVEVTTDNILEGRI). The span at 510-526 (ASEDGAGASSGSEVAAP) shows a compositional bias: low complexity. Disordered stretches follow at residues 510–544 (ASED…SADE) and 569–598 (PEDG…DSVT). Over residues 531–544 (FEVRGSRFSKSADE) the composition is skewed to basic and acidic residues. Positions 581-595 (DNDDSVPSIEDEDSD) are enriched in acidic residues.

As to expression, widely expressed.

Its subcellular location is the endoplasmic reticulum membrane. It catalyses the reaction [E2 ubiquitin-conjugating enzyme]-S-ubiquitinyl-L-cysteine + [acceptor protein]-L-cysteine = [E2 ubiquitin-conjugating enzyme]-L-cysteine + [acceptor protein]-S-ubiquitinyl-L-cysteine.. It functions in the pathway protein modification; protein ubiquitination. Its function is as follows. E3 ubiquitin-protein ligase that mediates the polyubiquitination of lysine and cysteine residues on target proteins. May participate in the final step of endoplasmic reticulum-associated degradation (ERAD). Required for proper lipid homeostasis. The chain is E3 ubiquitin-protein ligase AMFR from Danio rerio (Zebrafish).